Consider the following 366-residue polypeptide: Histidinol-phosphate aminotransferase (366 aa).

N6-(pyridoxal phosphate)lysine is present on Lys227.

This sequence belongs to the class-II pyridoxal-phosphate-dependent aminotransferase family. Histidinol-phosphate aminotransferase subfamily. Homodimer. The cofactor is pyridoxal 5'-phosphate.

It catalyses the reaction L-histidinol phosphate + 2-oxoglutarate = 3-(imidazol-4-yl)-2-oxopropyl phosphate + L-glutamate. It participates in amino-acid biosynthesis; L-histidine biosynthesis; L-histidine from 5-phospho-alpha-D-ribose 1-diphosphate: step 7/9. This is Histidinol-phosphate aminotransferase from Campylobacter hominis (strain ATCC BAA-381 / DSM 21671 / CCUG 45161 / LMG 19568 / NCTC 13146 / CH001A).